Consider the following 299-residue polypeptide: Ribosomal RNA small subunit methyltransferase H (299 aa).

Residues 36–38, Asp-55, Tyr-82, Asp-103, and Gln-110 each bind S-adenosyl-L-methionine; that span reads GGH. Composition is skewed to basic and acidic residues over residues 269–282 and 289–299; these read PVRP…ENPR and RAAERIEEGGD. A disordered region spans residues 269–299; it reads PVRPSEEEIRENPRARSGRLRAAERIEEGGD.

This sequence belongs to the methyltransferase superfamily. RsmH family.

The protein resides in the cytoplasm. It carries out the reaction cytidine(1402) in 16S rRNA + S-adenosyl-L-methionine = N(4)-methylcytidine(1402) in 16S rRNA + S-adenosyl-L-homocysteine + H(+). Functionally, specifically methylates the N4 position of cytidine in position 1402 (C1402) of 16S rRNA. The polypeptide is Ribosomal RNA small subunit methyltransferase H (Thermotoga maritima (strain ATCC 43589 / DSM 3109 / JCM 10099 / NBRC 100826 / MSB8)).